Reading from the N-terminus, the 187-residue chain is Elongation factor P (187 aa).

It belongs to the elongation factor P family.

The protein resides in the cytoplasm. It participates in protein biosynthesis; polypeptide chain elongation. In terms of biological role, involved in peptide bond synthesis. Stimulates efficient translation and peptide-bond synthesis on native or reconstituted 70S ribosomes in vitro. Probably functions indirectly by altering the affinity of the ribosome for aminoacyl-tRNA, thus increasing their reactivity as acceptors for peptidyl transferase. The sequence is that of Elongation factor P from Brachyspira hyodysenteriae (strain ATCC 49526 / WA1).